The chain runs to 111 residues: Cell division protein FtsB (111 aa).

At 1–3 (MGK) the chain is on the cytoplasmic side. Residues 4-21 (LTLLLLILLGWLQYSLWL) traverse the membrane as a helical segment. Over 22–111 (GKNGIHDYVR…TNTSSNNTQR (90 aa)) the chain is Periplasmic. A coiled-coil region spans residues 33-63 (KDDVVVQQGNNAKLKDRNEQLFAEIDDLNGG). The tract at residues 88-111 (VPESNHRNANTPSSTNTSSNNTQR) is disordered. The span at 97–111 (NTPSSTNTSSNNTQR) shows a compositional bias: low complexity.

The protein belongs to the FtsB family. Part of a complex composed of FtsB, FtsL and FtsQ.

It is found in the cell inner membrane. Functionally, essential cell division protein. May link together the upstream cell division proteins, which are predominantly cytoplasmic, with the downstream cell division proteins, which are predominantly periplasmic. In Pectobacterium atrosepticum (strain SCRI 1043 / ATCC BAA-672) (Erwinia carotovora subsp. atroseptica), this protein is Cell division protein FtsB.